A 459-amino-acid chain; its full sequence is tRNA modification GTPase MnmE (459 aa).

Residues Arg23, Glu88, and Arg127 each contribute to the (6S)-5-formyl-5,6,7,8-tetrahydrofolate site. Residues 223-381 (GLNTVIVGKP…FKEVIKELFF (159 aa)) enclose the TrmE-type G domain. Position 233 (Asn233) interacts with K(+). GTP is bound by residues 233-238 (NVGKSS), 252-258 (TDVPGTT), and 277-280 (DTAG). Ser237 is a binding site for Mg(2+). K(+) is bound by residues Thr252, Val254, and Thr257. Thr258 is a Mg(2+) binding site. Lys459 contacts (6S)-5-formyl-5,6,7,8-tetrahydrofolate.

It belongs to the TRAFAC class TrmE-Era-EngA-EngB-Septin-like GTPase superfamily. TrmE GTPase family. Homodimer. Heterotetramer of two MnmE and two MnmG subunits. It depends on K(+) as a cofactor.

It is found in the cytoplasm. Exhibits a very high intrinsic GTPase hydrolysis rate. Involved in the addition of a carboxymethylaminomethyl (cmnm) group at the wobble position (U34) of certain tRNAs, forming tRNA-cmnm(5)s(2)U34. This Clostridium novyi (strain NT) protein is tRNA modification GTPase MnmE.